We begin with the raw amino-acid sequence, 253 residues long: Vitamin B12 import ATP-binding protein BtuD (253 aa).

Residues 3–237 (LDAKNLAMPP…EQLESTFATQ (235 aa)) form the ABC transporter domain. 31-38 (GPNGSGKS) is an ATP binding site.

Belongs to the ABC transporter superfamily. Vitamin B12 importer (TC 3.A.1.13.1) family. In terms of assembly, the complex is composed of two ATP-binding proteins (BtuD), two transmembrane proteins (BtuC) and a solute-binding protein (BtuF).

Its subcellular location is the cell inner membrane. The enzyme catalyses an R-cob(III)alamin(out) + ATP + H2O = an R-cob(III)alamin(in) + ADP + phosphate + H(+). Part of the ABC transporter complex BtuCDF involved in vitamin B12 import. Responsible for energy coupling to the transport system. This Photobacterium profundum (strain SS9) protein is Vitamin B12 import ATP-binding protein BtuD.